We begin with the raw amino-acid sequence, 47 residues long: Boigatoxin-A (47 aa).

Q1 bears the Pyrrolidone carboxylic acid mark. Cystine bridges form between C10–C34 and C13–C21.

As to quaternary structure, monomer. As to expression, expressed by the venom gland.

It is found in the secreted. In terms of biological role, this toxin may inhibit nicotinic acetylcholine receptor (nAChR). It has poorly reversible postsynaptic blocking activity in a chick muscle preparation and readily reversible inhibitory activity at a presynaptic site in the rat vas deferens prostatic segment most likely to prevent the release of neurotransmitters. The polypeptide is Boigatoxin-A (Boiga dendrophila (Mangrove snake)).